The sequence spans 383 residues: Odorant receptor 94b (383 aa).

Residues 1 to 41 (MESTNRLSAIQTLLVIQRWIGLLKWENEGEDGVLTWLKRIY) lie on the Cytoplasmic side of the membrane. The helical transmembrane segment at 42–62 (PFVLHLPLTFTYIALMWYEAI) threads the bilayer. Residues 63–70 (TSSDFEEA) lie on the Extracellular side of the membrane. Residues 71–91 (GQVLYMSITELALVTKLLNIW) traverse the membrane as a helical segment. The Cytoplasmic segment spans residues 92-130 (YRRHEAASLIHELQHDPAFNLRNSEEIKFWQQNQRNFKR). The chain crosses the membrane as a helical span at residues 131–151 (IFYWYIWGSLFVAVMGYISVF). At 152–174 (FQEDYELPFGYYVPFEWRTRERY) the chain is on the extracellular side. The chain crosses the membrane as a helical span at residues 175-195 (FYAWGYNVVAMTLCCLSNILL). At 196–250 (DTLGCYFMFHIASLFRLLGMRLEALKNAAEEKARPELRRIFQLHTKVRRLTRECE) the chain is on the cytoplasmic side. A helical membrane pass occupies residues 251-271 (VLVSPYVLSQVVFSAFIICFS). The Extracellular portion of the chain corresponds to 272–284 (AYRLVHMGFKQRP). The helical transmembrane segment at 285–305 (GLFVTTVQFVAVMIVQIFLPC) threads the bilayer. Residues 306-358 (YYGNELTFHANALTNSVFGTNWLEYSVGTRKLLNCYMEFLKRPVKVRAGVFFE) lie on the Cytoplasmic side of the membrane. Residues 359 to 379 (IGLPIFVKTINNAYSFFALLL) form a helical membrane-spanning segment. Residues 380-383 (KISK) are Extracellular-facing.

Belongs to the insect chemoreceptor superfamily. Heteromeric odorant receptor channel (TC 1.A.69) family. Or2a subfamily. As to quaternary structure, interacts with Orco. Complexes exist early in the endomembrane system in olfactory sensory neurons (OSNs), coupling these complexes to the conserved ciliary trafficking pathway.

Its subcellular location is the cell membrane. Odorant receptor which mediates acceptance or avoidance behavior, depending on its substrates. The odorant receptor repertoire encodes a large collection of odor stimuli that vary widely in identity, intensity, and duration. May form a complex with Orco to form odorant-sensing units, providing sensitive and prolonged odorant signaling and calcium permeability. This is Odorant receptor 94b (Or94b) from Drosophila melanogaster (Fruit fly).